An 86-amino-acid polypeptide reads, in one-letter code: Photosystem I reaction center subunit PsaK (86 aa).

Residues 15 to 34 (PWSTQVAMVMITCNLLAIVA) traverse the membrane as a helical segment.

The protein belongs to the PsaG/PsaK family.

It is found in the plastid. The protein resides in the chloroplast thylakoid membrane. The protein is Photosystem I reaction center subunit PsaK of Pyropia yezoensis (Susabi-nori).